Reading from the N-terminus, the 196-residue chain is Adenine phosphoribosyltransferase (196 aa).

The protein belongs to the purine/pyrimidine phosphoribosyltransferase family. As to quaternary structure, homodimer.

The protein resides in the cytoplasm. The enzyme catalyses AMP + diphosphate = 5-phospho-alpha-D-ribose 1-diphosphate + adenine. It participates in purine metabolism; AMP biosynthesis via salvage pathway; AMP from adenine: step 1/1. Catalyzes a salvage reaction resulting in the formation of AMP, that is energically less costly than de novo synthesis. In Methylibium petroleiphilum (strain ATCC BAA-1232 / LMG 22953 / PM1), this protein is Adenine phosphoribosyltransferase.